Reading from the N-terminus, the 545-residue chain is Chaperonin GroEL (545 aa).

Residues 29-32 (TMGP), lysine 50, 86-90 (DGTTT), glycine 414, 477-479 (NAA), and aspartate 493 each bind ATP.

This sequence belongs to the chaperonin (HSP60) family. Forms a cylinder of 14 subunits composed of two heptameric rings stacked back-to-back. Interacts with the co-chaperonin GroES.

It is found in the cytoplasm. The enzyme catalyses ATP + H2O + a folded polypeptide = ADP + phosphate + an unfolded polypeptide.. Functionally, together with its co-chaperonin GroES, plays an essential role in assisting protein folding. The GroEL-GroES system forms a nano-cage that allows encapsulation of the non-native substrate proteins and provides a physical environment optimized to promote and accelerate protein folding. The chain is Chaperonin GroEL from Campylobacter fetus subsp. fetus (strain 82-40).